Reading from the N-terminus, the 1940-residue chain is Myosin-3 (1940 aa).

The Myosin N-terminal SH3-like domain occupies 33–82 (DAKTYCFVVDSKEEYAKGKIKSSQDGKVTVETEDNRTLVVKPEDVYAMNP). Residues 86-779 (DKIEDMAMLT…LLGTLEEMRD (694 aa)) form the Myosin motor domain. Residue Lys-130 is modified to N6,N6,N6-trimethyllysine. Position 179–186 (179–186 (GESGAGKT)) interacts with ATP. Actin-binding stretches follow at residues 656 to 678 (LNKL…IPNE) and 758 to 772 (KFGH…GLLG). Residues 782–811 (LAKLITRTQAVCRGFLMRVEFQKMMQRRES) form the IQ domain. The stretch at 840–1933 (LLKSAETEKE…KTRDFTSSRM (1094 aa)) forms a coiled coil. The disordered stretch occupies residues 1260-1289 (ARGKNEETQRSLSELTTQKSRLQTEAGELS). Over residues 1269 to 1282 (RSLSELTTQKSRLQ) the composition is skewed to polar residues.

Belongs to the TRAFAC class myosin-kinesin ATPase superfamily. Myosin family. As to quaternary structure, muscle myosin is a hexameric protein that consists of 2 heavy chain subunits (MHC), 2 alkali light chain subunits (MLC) and 2 regulatory light chain subunits (MLC-2).

It is found in the cytoplasm. The protein localises to the myofibril. Its function is as follows. Muscle contraction. In Rattus norvegicus (Rat), this protein is Myosin-3 (Myh3).